We begin with the raw amino-acid sequence, 277 residues long: Energy-coupling factor transporter ATP-binding protein EcfA1 (277 aa).

The 238-residue stretch at 5–242 (VKVNNISFEY…IKMLKEIGLD (238 aa)) folds into the ABC transporter domain. 41–48 (GHNGSGKS) contacts ATP.

The protein belongs to the ABC transporter superfamily. Energy-coupling factor EcfA family. As to quaternary structure, forms a stable energy-coupling factor (ECF) transporter complex composed of 2 membrane-embedded substrate-binding proteins (S component), 2 ATP-binding proteins (A component) and 2 transmembrane proteins (T component).

Its subcellular location is the cell membrane. In terms of biological role, ATP-binding (A) component of a common energy-coupling factor (ECF) ABC-transporter complex. Unlike classic ABC transporters this ECF transporter provides the energy necessary to transport a number of different substrates. The protein is Energy-coupling factor transporter ATP-binding protein EcfA1 of Clostridioides difficile (strain 630) (Peptoclostridium difficile).